We begin with the raw amino-acid sequence, 89 residues long: Small ribosomal subunit protein uS15 (89 aa).

A disordered region spans residues 1-24; sequence MSLNAEQKSEIVEQFRRSPSDTGS. Residues 7 to 19 are compositionally biased toward basic and acidic residues; sequence QKSEIVEQFRRSP.

It belongs to the universal ribosomal protein uS15 family. Part of the 30S ribosomal subunit. Forms a bridge to the 50S subunit in the 70S ribosome, contacting the 23S rRNA.

In terms of biological role, one of the primary rRNA binding proteins, it binds directly to 16S rRNA where it helps nucleate assembly of the platform of the 30S subunit by binding and bridging several RNA helices of the 16S rRNA. Its function is as follows. Forms an intersubunit bridge (bridge B4) with the 23S rRNA of the 50S subunit in the ribosome. The chain is Small ribosomal subunit protein uS15 from Halorhodospira halophila (strain DSM 244 / SL1) (Ectothiorhodospira halophila (strain DSM 244 / SL1)).